The chain runs to 102 residues: Protein GOLVEN 4 (102 aa).

An N-terminal signal peptide occupies residues 1–27; the sequence is MEMKKWSYANLITLALLFLFFIILLLA. Residues 28-89 constitute a propeptide that is removed on maturation; it reads FQGGSRDDDH…QEREVYVELR (62 aa). The tract at residues 56–78 is disordered; sequence KSLKPINPTKKNGFEYPDQGSHD. Residue Y91 is modified to Sulfotyrosine. P99 is modified (hydroxyproline).

The protein belongs to the RGF family. As to quaternary structure, binds to LRR receptor-like serine/threonine-protein kinases to trigger their dimerization with SERK proteins and subsequent signaling. In terms of tissue distribution, expressed in roots and sepals.

Its subcellular location is the secreted. Its function is as follows. Signaling peptide (root growth factor) that promotes root hairs formation and growth. Maintains the postembryonic root stem cell niche. Regulates the pattern of root growth and lateral root development by modulating the length and the number of cortical cells in the root apical meristem (RAM), and the anticlinal asymmetric cell divisions in lateral root initiation cells. This chain is Protein GOLVEN 4, found in Arabidopsis thaliana (Mouse-ear cress).